We begin with the raw amino-acid sequence, 493 residues long: Cholesteryl ester transfer protein (493 aa).

Residues 1 to 17 form the signal peptide; it reads MLAATVLTLALLGNVHA. N-linked (GlcNAc...) asparagine glycans are attached at residues Asn-59 and Asn-105. A disulfide bridge connects residues Cys-160 and Cys-201. Residues Asn-257, Asn-358, and Asn-413 are each glycosylated (N-linked (GlcNAc...) asparagine).

Belongs to the BPI/LBP/Plunc superfamily. BPI/LBP family. As to expression, probably primarily expressed in liver and adipose tissues. Detected in adrenal gland, mesenteric fat, spleen and aorta.

It localises to the secreted. The catalysed reaction is cholesteryl (9Z-octadecenoate)(in) = cholesteryl (9Z-octadecenoate)(out). It catalyses the reaction 1,2,3-tri-(9Z-octadecenoyl)-glycerol(in) = 1,2,3-tri-(9Z-octadecenoyl)-glycerol(out). It carries out the reaction cholesteryl (9Z,12Z)-octadecadienoate(in) = cholesteryl (9Z,12Z)-octadecadienoate(out). In terms of biological role, involved in the transfer of neutral lipids, including cholesteryl ester and triglyceride, among lipoprotein particles. Allows the net movement of cholesteryl ester from high density lipoproteins/HDL to triglyceride-rich very low density lipoproteins/VLDL, and the equimolar transport of triglyceride from VLDL to HDL. Regulates the reverse cholesterol transport, by which excess cholesterol is removed from peripheral tissues and returned to the liver for elimination. The sequence is that of Cholesteryl ester transfer protein from Macaca fascicularis (Crab-eating macaque).